Here is a 402-residue protein sequence, read N- to C-terminus: CCA-adding enzyme (402 aa).

The ATP site is built by Gly-32 and Arg-35. Gly-32 and Arg-35 together coordinate CTP. 2 residues coordinate Mg(2+): Asp-45 and Asp-47. 5 residues coordinate ATP: Arg-119, Asp-162, Arg-165, Arg-168, and Arg-171. Residues Arg-119, Asp-162, Arg-165, Arg-168, and Arg-171 each coordinate CTP.

It belongs to the tRNA nucleotidyltransferase/poly(A) polymerase family. Bacterial CCA-adding enzyme type 3 subfamily. Homodimer. Requires Mg(2+) as cofactor.

It carries out the reaction a tRNA precursor + 2 CTP + ATP = a tRNA with a 3' CCA end + 3 diphosphate. It catalyses the reaction a tRNA with a 3' CCA end + 2 CTP + ATP = a tRNA with a 3' CCACCA end + 3 diphosphate. Its function is as follows. Catalyzes the addition and repair of the essential 3'-terminal CCA sequence in tRNAs without using a nucleic acid template. Adds these three nucleotides in the order of C, C, and A to the tRNA nucleotide-73, using CTP and ATP as substrates and producing inorganic pyrophosphate. tRNA 3'-terminal CCA addition is required both for tRNA processing and repair. Also involved in tRNA surveillance by mediating tandem CCA addition to generate a CCACCA at the 3' terminus of unstable tRNAs. While stable tRNAs receive only 3'-terminal CCA, unstable tRNAs are marked with CCACCA and rapidly degraded. In Lactococcus lactis subsp. cremoris (strain SK11), this protein is CCA-adding enzyme.